The chain runs to 372 residues: Peptide chain release factor 2 (372 aa).

At glutamine 253 the chain carries N5-methylglutamine.

The protein belongs to the prokaryotic/mitochondrial release factor family. Post-translationally, methylated by PrmC. Methylation increases the termination efficiency of RF2.

The protein localises to the cytoplasm. Its function is as follows. Peptide chain release factor 2 directs the termination of translation in response to the peptide chain termination codons UGA and UAA. The sequence is that of Peptide chain release factor 2 from Mycolicibacterium gilvum (strain PYR-GCK) (Mycobacterium gilvum (strain PYR-GCK)).